Here is a 209-residue protein sequence, read N- to C-terminus: Peroxynitrite isomerase 2 (209 aa).

The GXWXGXG signature appears at 56–62 (GVWRGEG). Residues lysine 172 and histidine 199 each contribute to the heme b site.

This sequence belongs to the nitrobindin family. Homodimer. It depends on heme b as a cofactor.

The enzyme catalyses peroxynitrite = nitrate. It participates in nitrogen metabolism. Functionally, heme-binding protein able to scavenge peroxynitrite and to protect free L-tyrosine against peroxynitrite-mediated nitration, by acting as a peroxynitrite isomerase that converts peroxynitrite to nitrate. Therefore, this protein likely plays a role in peroxynitrite sensing and in the detoxification of reactive nitrogen and oxygen species (RNS and ROS, respectively). Is able to bind nitric oxide (NO) in vitro, but may act as a sensor of peroxynitrite levels in vivo. In Mycolicibacterium gilvum (strain PYR-GCK) (Mycobacterium gilvum (strain PYR-GCK)), this protein is Peroxynitrite isomerase 2.